The primary structure comprises 182 residues: Caltractin ICL1b (182 aa).

The interval 1 to 31 (MSRRGQQPPPQQQQAPPQKNQAGKFNPAEFV) is disordered. EF-hand domains are found at residues 38 to 73 (EEVLEIKEAFDLFDTDGTQSIDPKELKAAMTSLGFE), 74 to 109 (AKNQTIYQMISDLDTDGSGQIDFAEFLKLMTARISE), 111 to 146 (DSKADIQKVFNLFDSERAGVITLKDLRKVAKELGET), and 147 to 182 (MDDSELQEMIDRADSDGDAQVTFEDFYNIMTKKTFA). Ca(2+) is bound by residues Asp-51, Asp-53, Thr-55, Ser-57, Glu-62, Asp-87, Asp-89, Ser-91, Gln-93, and Glu-98.

The protein belongs to the centrin family.

Its subcellular location is the cytoplasm. The protein resides in the cytoskeleton. Its function is as follows. Plays a fundamental role in microtubule organizing center structure and function. Component of the infraciliary lattice (ICL) and the ciliary basal bodies. This Paramecium tetraurelia protein is Caltractin ICL1b (Icl1b).